We begin with the raw amino-acid sequence, 217 residues long: Large ribosomal subunit protein bL25 (217 aa).

This sequence belongs to the bacterial ribosomal protein bL25 family. CTC subfamily. Part of the 50S ribosomal subunit; part of the 5S rRNA/L5/L18/L25 subcomplex. Contacts the 5S rRNA. Binds to the 5S rRNA independently of L5 and L18.

Its function is as follows. This is one of the proteins that binds to the 5S RNA in the ribosome where it forms part of the central protuberance. The protein is Large ribosomal subunit protein bL25 of Methylobacterium sp. (strain 4-46).